A 175-amino-acid chain; its full sequence is Calcineurin subunit B (175 aa).

EF-hand domains are found at residues P21–P56, R60–K88, G90–N125, and Q131–V166. Residues D34, D36, S38, S40, E45, D66, D68, S70, T72, E77, D103, D105, D107, Y109, E114, D144, D146, D148, K150, and E155 each contribute to the Ca(2+) site.

This sequence belongs to the calcineurin regulatory subunit family. As to quaternary structure, composed of a catalytic subunit (A) and a regulatory subunit (B).

In terms of biological role, regulatory subunit of calcineurin, a calcium-dependent, calmodulin stimulated protein phosphatase. Confers calcium sensitivity. Plays a central role in virulence and antifungal drug action. In Cryptococcus neoformans var. neoformans serotype D (strain B-3501A) (Filobasidiella neoformans), this protein is Calcineurin subunit B (CNB1).